We begin with the raw amino-acid sequence, 442 residues long: tRNA(Ile)-lysidine synthase (442 aa).

An ATP-binding site is contributed by S28–S33.

It belongs to the tRNA(Ile)-lysidine synthase family.

The protein resides in the cytoplasm. The catalysed reaction is cytidine(34) in tRNA(Ile2) + L-lysine + ATP = lysidine(34) in tRNA(Ile2) + AMP + diphosphate + H(+). Its function is as follows. Ligates lysine onto the cytidine present at position 34 of the AUA codon-specific tRNA(Ile) that contains the anticodon CAU, in an ATP-dependent manner. Cytidine is converted to lysidine, thus changing the amino acid specificity of the tRNA from methionine to isoleucine. In Pseudomonas aeruginosa (strain ATCC 15692 / DSM 22644 / CIP 104116 / JCM 14847 / LMG 12228 / 1C / PRS 101 / PAO1), this protein is tRNA(Ile)-lysidine synthase.